The sequence spans 350 residues: Divinyl chlorophyll a/b light-harvesting protein PcbB (350 aa).

Transmembrane regions (helical) follow at residues 27-47 (FLAA…SFTL), 89-109 (IVVT…GGLM), 141-161 (FILG…VEWA), 202-222 (VMGG…WHIV), 244-264 (LSWA…WCAS), and 305-325 (LTNI…WHAL).

The protein belongs to the PsbB/PsbC family. IsiA/Pcb subfamily. As to quaternary structure, the antenna complex consists of divinyl chlorophylls (a and b) and divinyl chlorophyll a/b binding proteins. Under iron-starvation forms a complex with PSI, consisting of a PSI trimer surrounded by a ring composed of 18 PcbB subunits. Divinyl chlorophyll a serves as cofactor. The cofactor is divinyl chlorophyll b.

Its subcellular location is the cellular thylakoid membrane. The antenna complex functions as a light receptor, it captures and delivers excitation energy to photosystems I. The Prochlorales pcb genes are not related to higher plant LHCs. This is Divinyl chlorophyll a/b light-harvesting protein PcbB (pcbB) from Prochlorococcus marinus (strain MIT 9313).